The following is a 456-amino-acid chain: Histidine--tRNA ligase (456 aa).

This sequence belongs to the class-II aminoacyl-tRNA synthetase family. Homodimer.

It is found in the cytoplasm. The catalysed reaction is tRNA(His) + L-histidine + ATP = L-histidyl-tRNA(His) + AMP + diphosphate + H(+). In Cupriavidus taiwanensis (strain DSM 17343 / BCRC 17206 / CCUG 44338 / CIP 107171 / LMG 19424 / R1) (Ralstonia taiwanensis (strain LMG 19424)), this protein is Histidine--tRNA ligase.